The following is a 270-amino-acid chain: Type III pantothenate kinase (270 aa).

An ATP-binding site is contributed by 19–26 (DIGNTSTT). Substrate is bound by residues Tyr109 and 116–119 (GADR). Residue Asp118 is the Proton acceptor of the active site. Residue Asp139 participates in K(+) binding. Thr142 contributes to the ATP binding site. Thr194 contributes to the substrate binding site.

It belongs to the type III pantothenate kinase family. Homodimer. It depends on NH4(+) as a cofactor. The cofactor is K(+).

The protein resides in the cytoplasm. It carries out the reaction (R)-pantothenate + ATP = (R)-4'-phosphopantothenate + ADP + H(+). Its pathway is cofactor biosynthesis; coenzyme A biosynthesis; CoA from (R)-pantothenate: step 1/5. Its function is as follows. Catalyzes the phosphorylation of pantothenate (Pan), the first step in CoA biosynthesis. This chain is Type III pantothenate kinase, found in Chlorobaculum tepidum (strain ATCC 49652 / DSM 12025 / NBRC 103806 / TLS) (Chlorobium tepidum).